A 145-amino-acid polypeptide reads, in one-letter code: 3-dehydroquinate dehydratase (145 aa).

The active-site Proton acceptor is the tyrosine 22. Positions 71, 77, and 84 each coordinate substrate. Residue histidine 97 is the Proton donor of the active site. Residues 98 to 99 and arginine 108 each bind substrate; that span reads LS.

This sequence belongs to the type-II 3-dehydroquinase family. In terms of assembly, homododecamer.

It catalyses the reaction 3-dehydroquinate = 3-dehydroshikimate + H2O. It participates in metabolic intermediate biosynthesis; chorismate biosynthesis; chorismate from D-erythrose 4-phosphate and phosphoenolpyruvate: step 3/7. In terms of biological role, catalyzes a trans-dehydration via an enolate intermediate. The chain is 3-dehydroquinate dehydratase from Francisella philomiragia subsp. philomiragia (strain ATCC 25017 / CCUG 19701 / FSC 153 / O#319-036).